The chain runs to 180 residues: ATP synthase subunit delta, chloroplastic (180 aa).

It belongs to the ATPase delta chain family. In terms of assembly, F-type ATPases have 2 components, F(1) - the catalytic core - and F(0) - the membrane proton channel. F(1) has five subunits: alpha(3), beta(3), gamma(1), delta(1), epsilon(1). CF(0) has four main subunits: a(1), b(1), b'(1) and c(10-14). The alpha and beta chains form an alternating ring which encloses part of the gamma chain. F(1) is attached to F(0) by a central stalk formed by the gamma and epsilon chains, while a peripheral stalk is formed by the delta, b and b' chains.

The protein localises to the plastid. The protein resides in the chloroplast thylakoid membrane. Functionally, f(1)F(0) ATP synthase produces ATP from ADP in the presence of a proton or sodium gradient. F-type ATPases consist of two structural domains, F(1) containing the extramembraneous catalytic core and F(0) containing the membrane proton channel, linked together by a central stalk and a peripheral stalk. During catalysis, ATP synthesis in the catalytic domain of F(1) is coupled via a rotary mechanism of the central stalk subunits to proton translocation. In terms of biological role, this protein is part of the stalk that links CF(0) to CF(1). It either transmits conformational changes from CF(0) to CF(1) or is implicated in proton conduction. The chain is ATP synthase subunit delta, chloroplastic from Rhodomonas salina (Cryptomonas salina).